The following is a 71-amino-acid chain: Protein SlyX homolog (71 aa).

The interval 52-71 (RLDQAESSAGAPANERPPHY) is disordered.

It belongs to the SlyX family.

The sequence is that of Protein SlyX homolog from Rhodopseudomonas palustris (strain ATCC BAA-98 / CGA009).